We begin with the raw amino-acid sequence, 211 residues long: N-(5'-phosphoribosyl)anthranilate isomerase (211 aa).

This sequence belongs to the TrpF family.

The catalysed reaction is N-(5-phospho-beta-D-ribosyl)anthranilate = 1-(2-carboxyphenylamino)-1-deoxy-D-ribulose 5-phosphate. The protein operates within amino-acid biosynthesis; L-tryptophan biosynthesis; L-tryptophan from chorismate: step 3/5. This is N-(5'-phosphoribosyl)anthranilate isomerase from Pseudomonas paraeruginosa (strain DSM 24068 / PA7) (Pseudomonas aeruginosa (strain PA7)).